A 276-amino-acid polypeptide reads, in one-letter code: Large ribosomal subunit protein uL2 (276 aa).

The disordered stretch occupies residues 224-276; sequence VMNPVDHPHGGGEGKAPIGRKSPMTPWGKPTLGYKTRKKKNKSDKFIIRRRKK. Positions 258 to 276 are enriched in basic residues; sequence KTRKKKNKSDKFIIRRRKK.

This sequence belongs to the universal ribosomal protein uL2 family. As to quaternary structure, part of the 50S ribosomal subunit. Forms a bridge to the 30S subunit in the 70S ribosome.

In terms of biological role, one of the primary rRNA binding proteins. Required for association of the 30S and 50S subunits to form the 70S ribosome, for tRNA binding and peptide bond formation. It has been suggested to have peptidyltransferase activity; this is somewhat controversial. Makes several contacts with the 16S rRNA in the 70S ribosome. This chain is Large ribosomal subunit protein uL2, found in Geobacillus stearothermophilus (Bacillus stearothermophilus).